The primary structure comprises 107 residues: UPF0473 protein Ldb1604 (107 aa).

The protein belongs to the UPF0473 family.

The chain is UPF0473 protein Ldb1604 from Lactobacillus delbrueckii subsp. bulgaricus (strain ATCC 11842 / DSM 20081 / BCRC 10696 / JCM 1002 / NBRC 13953 / NCIMB 11778 / NCTC 12712 / WDCM 00102 / Lb 14).